We begin with the raw amino-acid sequence, 493 residues long: Ecdysteroid UDP-glucosyltransferase (493 aa).

The signal sequence occupies residues 1 to 17 (MIFILLTTLLAVGGAQT).

Belongs to the UDP-glycosyltransferase family.

Its function is as follows. Catalyzes the transfer of glucose from UDP-glucose to ecdysteroids which are insect molting hormones. Expression of egt interferes with normal insect development and block molting. The chain is Ecdysteroid UDP-glucosyltransferase (egt) from Choristoneura fumiferana defective polyhedrosis virus (Cfdef).